A 105-amino-acid polypeptide reads, in one-letter code: Transcription factor S (105 aa).

Zn(2+)-binding residues include Cys5, Cys8, Cys21, Cys24, Cys66, Cys69, Cys94, and Cys97. The segment at 5–24 adopts a C4-type zinc-finger fold; that stretch reads CPKCNNIMLPKNGRLKCTVC. The TFIIS-type zinc finger occupies 62-102; sequence TRIECPSCGNMEASWWLQQTRCADEPETRFYKCKKCGHTWR.

Belongs to the archaeal RpoM/eukaryotic RPA12/RPB9/RPC11 RNA polymerase family.

Functionally, induces RNA cleavage activity in the RNA polymerase. In its presence, the cleavage activity of the RNA polymerase truncates the RNA back to position +15 in a stepwise manner by releasing mainly dinucleotides from the 3'-end of the nascent RNA. The truncated RNAs are able to continue elongation. Involved in transcriptional proofreading and fidelity. Misincorporation of nucleotides during elongation of transcription leads to arrested elongation complexes which are rescued by TFS-promoted removal of a dinucleotide from the 3'-end. TFS is able to induce a cleavage resynthesis cycle in stalled elongation complexes (resulting from the next missing nucleotide or a reduced incorporation rate of a wrong nucleotide) preventing misincorporation and enabling proofreading in a post-incorporation manner. Pausing of elongation complexes is the main determinant of TFS-induced RNA cleavage. The protein is Transcription factor S of Methanothermococcus thermolithotrophicus (Methanococcus thermolithotrophicus).